The chain runs to 115 residues: Androgen-binding protein homolog (115 aa).

The first 23 residues, 1-23 (MKGTLLLLALLVTGELGFQTTEA), serve as a signal peptide directing secretion.

The protein belongs to the secretoglobin family.

It localises to the secreted. In Mesocricetus auratus (Golden hamster), this protein is Androgen-binding protein homolog.